We begin with the raw amino-acid sequence, 323 residues long: CYFIP-related Rac1 interactor A (323 aa).

The protein belongs to the CYRI family. In terms of assembly, interacts with RAC1 (GTP-bound form preferentially).

It is found in the membrane. May negatively regulate RAC1 signaling and RAC1-driven cytoskeletal remodeling. May regulate chemotaxis, cell migration and epithelial polarization by controlling the polarity, plasticity, duration and extent of protrusions. This chain is CYFIP-related Rac1 interactor A (CYRIA), found in Bos taurus (Bovine).